Here is a 212-residue protein sequence, read N- to C-terminus: Ribonuclease HII (212 aa).

Residues 1–199 (MIGGIDEAGR…VGGRIGLGRN (199 aa)) form the RNase H type-2 domain. Residues Asp6, Glu7, and Asp101 each coordinate a divalent metal cation.

Belongs to the RNase HII family. Requires Mn(2+) as cofactor. Mg(2+) serves as cofactor.

The protein localises to the cytoplasm. It catalyses the reaction Endonucleolytic cleavage to 5'-phosphomonoester.. Functionally, endonuclease that specifically degrades the RNA of RNA-DNA hybrids. This Pyrobaculum aerophilum (strain ATCC 51768 / DSM 7523 / JCM 9630 / CIP 104966 / NBRC 100827 / IM2) protein is Ribonuclease HII.